A 1372-amino-acid polypeptide reads, in one-letter code: Serine protease pic autotransporter (1372 aa).

Residues 1 to 55 (MNKVYSLKYCPVTGGLIAVSELARRVIKKTCRRLTHILLAGIPAICLCYSQISQA) form the signal peptide. A Peptidase S6 domain is found at 56-301 (GIVRSDIAYQ…NVIPTDYLNQ (246 aa)). Catalysis depends on charge relay system residues His-127, Asp-155, and Ser-258. One can recognise an Autotransporter domain in the interval 1106 to 1372 (DTNGDAGAWA…AVNANFRYMF (267 aa)).

In terms of processing, cleaved to release the mature protein from the outer membrane.

The protein resides in the periplasm. The protein localises to the secreted. Its subcellular location is the cell surface. It is found in the cell outer membrane. In terms of biological role, involved in intestinal colonization, displays in vitro mucinolytic activity, serum resistance, and hemagglutination. Important to penetrate the intestinal mucus layer. In Shigella flexneri, this protein is Serine protease pic autotransporter (pic).